Here is a 200-residue protein sequence, read N- to C-terminus: Late protein I196L (200 aa).

2 repeat units span residues 28–48 and 49–69. A 3; approximate repeat occupies 70–91; the sequence is SNYLTSAISTNISDKEEDTPFS.

It belongs to the asfivirus I196L family.

In African swine fever virus (isolate Tick/South Africa/Pretoriuskop Pr4/1996) (ASFV), this protein is Late protein I196L.